Here is a 694-residue protein sequence, read N- to C-terminus: Polyphosphate kinase (694 aa).

Position 45 (N45) interacts with ATP. Mg(2+) contacts are provided by R367 and R397. H427 serves as the catalytic Phosphohistidine intermediate. 3 residues coordinate ATP: Y460, R553, and H580.

It belongs to the polyphosphate kinase 1 (PPK1) family. Mg(2+) is required as a cofactor. Post-translationally, an intermediate of this reaction is the autophosphorylated ppk in which a phosphate is covalently linked to a histidine residue through a N-P bond.

The catalysed reaction is [phosphate](n) + ATP = [phosphate](n+1) + ADP. Its function is as follows. Catalyzes the reversible transfer of the terminal phosphate of ATP to form a long-chain polyphosphate (polyP). The chain is Polyphosphate kinase from Campylobacter jejuni (strain RM1221).